Reading from the N-terminus, the 299-residue chain is NAD kinase (299 aa).

The active-site Proton acceptor is the Asp64. Residues 64–65, 138–139, Arg149, Arg166, Asp168, 179–184, and Gln238 each bind NAD(+); these read DG, ND, and TGYAVS.

The protein belongs to the NAD kinase family. Requires a divalent metal cation as cofactor.

The protein localises to the cytoplasm. It catalyses the reaction NAD(+) + ATP = ADP + NADP(+) + H(+). In terms of biological role, involved in the regulation of the intracellular balance of NAD and NADP, and is a key enzyme in the biosynthesis of NADP. Catalyzes specifically the phosphorylation on 2'-hydroxyl of the adenosine moiety of NAD to yield NADP. The sequence is that of NAD kinase from Nitratidesulfovibrio vulgaris (strain ATCC 29579 / DSM 644 / CCUG 34227 / NCIMB 8303 / VKM B-1760 / Hildenborough) (Desulfovibrio vulgaris).